The primary structure comprises 257 residues: UPF0246 protein SO_3540 (257 aa).

The protein belongs to the UPF0246 family.

In Shewanella oneidensis (strain ATCC 700550 / JCM 31522 / CIP 106686 / LMG 19005 / NCIMB 14063 / MR-1), this protein is UPF0246 protein SO_3540.